A 189-amino-acid chain; its full sequence is UPF0301 protein PputGB1_5045 (189 aa).

It belongs to the UPF0301 (AlgH) family.

The chain is UPF0301 protein PputGB1_5045 from Pseudomonas putida (strain GB-1).